Consider the following 483-residue polypeptide: (R)-mandelonitrile beta-glucosyltransferase (483 aa).

The active-site Proton acceptor is His-22. His-22 provides a ligand contact to an anthocyanidin. Asp-124 serves as the catalytic Charge relay. The UDP-alpha-D-glucose site is built by Thr-146, Gln-363, His-378, Trp-381, Asn-382, Ser-383, and Glu-386. Ala-401 lines the an anthocyanidin pocket. Residues Glu-402 and Gln-403 each coordinate UDP-alpha-D-glucose.

This sequence belongs to the UDP-glycosyltransferase family.

The enzyme catalyses (R)-mandelonitrile + UDP-alpha-D-glucose = (R)-prunasin + UDP + H(+). Involved in the biosynthesis of the cyanogenic glycoside (R)-prunasin, a precursor of (R)-amygdalin, which at high concentrations is associated with intense bitterness in kernels of almond. Stereo-selectively glucosylates (R)-mandelonitrile to produce (R)-prunasin. The protein is (R)-mandelonitrile beta-glucosyltransferase of Prunus dulcis (Almond).